A 486-amino-acid chain; its full sequence is Cardiolipin synthase A (486 aa).

Transmembrane regions (helical) follow at residues 3–23 and 38–58; these read TFYTVVSWLVILGYWVLIAGV and MAWLLIIYILPLVGIIAYLSV. 2 PLD phosphodiesterase domains span residues 219-246 and 399-426; these read MDLRQHRKMVMIDNYIAYTGSMNMVDPR and EGGLLHTKSVLVDGELSLVGTVNLDMRS. Active-site residues include His224, Lys226, Asp231, His404, Lys406, and Asp411.

It belongs to the phospholipase D family. Cardiolipin synthase subfamily. ClsA sub-subfamily.

The protein resides in the cell inner membrane. It carries out the reaction 2 a 1,2-diacyl-sn-glycero-3-phospho-(1'-sn-glycerol) = a cardiolipin + glycerol. Catalyzes the reversible phosphatidyl group transfer from one phosphatidylglycerol molecule to another to form cardiolipin (CL) (diphosphatidylglycerol) and glycerol. The sequence is that of Cardiolipin synthase A from Salmonella paratyphi A (strain ATCC 9150 / SARB42).